The sequence spans 299 residues: ATP synthase gamma chain (299 aa).

It belongs to the ATPase gamma chain family. As to quaternary structure, F-type ATPases have 2 components, CF(1) - the catalytic core - and CF(0) - the membrane proton channel. CF(1) has five subunits: alpha(3), beta(3), gamma(1), delta(1), epsilon(1). CF(0) has three main subunits: a, b and c.

It is found in the cell membrane. Its function is as follows. Produces ATP from ADP in the presence of a proton gradient across the membrane. The gamma chain is believed to be important in regulating ATPase activity and the flow of protons through the CF(0) complex. The chain is ATP synthase gamma chain from Leifsonia xyli subsp. xyli (strain CTCB07).